A 455-amino-acid chain; its full sequence is Beta-cyclopiazonate dehydrogenase (455 aa).

Residues 1 to 25 form the signal peptide; the sequence is MAVRIARFLGLSTVAYLALANGIDA.

Belongs to the beta-cyclopiazonate dehydrogenase family. The cofactor is FAD.

It carries out the reaction beta-cyclopiazonate + A = alpha-cyclopiazonate + AH2. Beta-cyclopiazonate dehydrogenase involved in the synthesis of the fungal neurotoxin alpha-cyclopiazonic acid (CPA). CpaO carries out the dehydrogenation of beta-CPA to yield an unstable enimine product, which is captured by intramolecular cyclization to create the pentacyclic fused scaffold of alpha-cyclopiazonate. The polypeptide is Beta-cyclopiazonate dehydrogenase (Aspergillus oryzae (strain ATCC 42149 / RIB 40) (Yellow koji mold)).